The primary structure comprises 186 residues: Casparian strip membrane protein 3 (186 aa).

Topologically, residues 1–26 are cytoplasmic; sequence MTKSTYVELGEEKTSNQKGNMKRGVS. A helical membrane pass occupies residues 27 to 47; that stretch reads ILDFILRLIAIVATLASAIAM. At 48-74 the chain is on the extracellular side; that stretch reads GTTDESLPFFTQFVRFRANYDDLPTLR. A helical transmembrane segment spans residues 75–95; the sequence is FFVVASAIVSGYLILSLPLSI. The Cytoplasmic segment spans residues 96-107; that stretch reads LHIIRSSAGMTR. A helical transmembrane segment spans residues 108–128; the sequence is VIFIILDTVMLGLLTAGSSAA. At 129–161 the chain is on the extracellular side; the sequence is ASIVYLAHKGNRKANWFAFCQQYNSFCERISGS. Residues 162-182 traverse the membrane as a helical segment; the sequence is LIGSFIAIPLFIMLILLSALV. The Cytoplasmic segment spans residues 183 to 186; the sequence is LSRR.

This sequence belongs to the Casparian strip membrane proteins (CASP) family. Homodimer and heterodimers.

It localises to the cell membrane. Its function is as follows. Regulates membrane-cell wall junctions and localized cell wall deposition. Required for establishment of the Casparian strip membrane domain (CSD) and the subsequent formation of Casparian strips, a cell wall modification of the root endodermis that determines an apoplastic barrier between the intraorganismal apoplasm and the extraorganismal apoplasm and prevents lateral diffusion. This is Casparian strip membrane protein 3 from Medicago truncatula (Barrel medic).